The chain runs to 320 residues: dTDP-glucose 4,6-dehydratase (320 aa).

NAD(+)-binding positions include 11–12, 38–41, 64–65, 84–88, and S103; these read FI, DKLG, DI, and FAAET. T88 lines the substrate pocket. Substrate is bound at residue T128. The Proton donor role is filled by D129. Catalysis depends on proton acceptor residues E130 and Y152. 152 to 156 lines the NAD(+) pocket; it reads YAASK. A substrate-binding site is contributed by N181. N182 contributes to the NAD(+) binding site. Substrate contacts are provided by residues 191 to 192, 207 to 209, R216, N251, and 274 to 278; these read KM, PVY, and DRKGH.

This sequence belongs to the NAD(P)-dependent epimerase/dehydratase family. dTDP-glucose dehydratase subfamily. In terms of assembly, homodimer. The cofactor is NAD(+).

The catalysed reaction is dTDP-alpha-D-glucose = dTDP-4-dehydro-6-deoxy-alpha-D-glucose + H2O. Probably involved in the biosynthesis of the acarviose moiety of the alpha-glucosidase inhibitor acarbose. Catalyzes the dehydration of dTDP-D-glucose to form dTDP-6-deoxy-D-xylo-4-hexulose via a three-step process involving oxidation, dehydration and reduction. This Actinoplanes sp. (strain ATCC 31044 / CBS 674.73 / SE50/110) protein is dTDP-glucose 4,6-dehydratase.